Consider the following 1097-residue polypeptide: UPF0746 protein DDB_G0281095 (1097 aa).

Basic and acidic residues predominate over residues 1–11; that stretch reads MVNNNKRKEIE. The disordered stretch occupies residues 1–24; the sequence is MVNNNKRKEIENQENDNDDDNDGL. Positions 12–22 are enriched in acidic residues; sequence NQENDNDDDND. Residues 35-69 form the SAP domain; sequence YDSIRSKELQTIAKSLGLPNNGKKQEVYKRIEGYF. Residues 329-521 are a coiled coil; the sequence is FKEIREIHQQ…QLILELNEIQ (193 aa).

The protein belongs to the UPF0746 family.

The sequence is that of UPF0746 protein DDB_G0281095 from Dictyostelium discoideum (Social amoeba).